A 335-amino-acid chain; its full sequence is Nicotinate-nucleotide--dimethylbenzimidazole phosphoribosyltransferase (335 aa).

The active-site Proton acceptor is E304.

The protein belongs to the CobT family.

The enzyme catalyses 5,6-dimethylbenzimidazole + nicotinate beta-D-ribonucleotide = alpha-ribazole 5'-phosphate + nicotinate + H(+). It functions in the pathway nucleoside biosynthesis; alpha-ribazole biosynthesis; alpha-ribazole from 5,6-dimethylbenzimidazole: step 1/2. In terms of biological role, catalyzes the synthesis of alpha-ribazole-5'-phosphate from nicotinate mononucleotide (NAMN) and 5,6-dimethylbenzimidazole (DMB). This chain is Nicotinate-nucleotide--dimethylbenzimidazole phosphoribosyltransferase, found in Thermus thermophilus (strain ATCC 27634 / DSM 579 / HB8).